We begin with the raw amino-acid sequence, 322 residues long: Ferredoxin--NADP reductase (322 aa).

Leu-87, Phe-119, Asp-279, and Thr-320 together coordinate FAD.

Belongs to the ferredoxin--NADP reductase type 2 family. As to quaternary structure, homodimer. FAD is required as a cofactor.

The enzyme catalyses 2 reduced [2Fe-2S]-[ferredoxin] + NADP(+) + H(+) = 2 oxidized [2Fe-2S]-[ferredoxin] + NADPH. In Streptococcus suis (strain 98HAH33), this protein is Ferredoxin--NADP reductase.